The primary structure comprises 226 residues: UPF0177 protein YbdJ (226 aa).

5 consecutive transmembrane segments (helical) span residues Leu-16 to Phe-36, Phe-43 to Ala-63, Leu-81 to Leu-101, Phe-169 to Val-189, and Leu-206 to Phe-226.

The protein belongs to the UPF0177 family.

Its subcellular location is the cell membrane. In Lactococcus lactis subsp. lactis (strain IL1403) (Streptococcus lactis), this protein is UPF0177 protein YbdJ (ybdJ).